Here is a 147-residue protein sequence, read N- to C-terminus: DNA-directed RNA polymerase subunit 6 homolog (147 aa).

Residues 20 to 39 (ETEEENFVDSEEESEDKDEI) are disordered.

This sequence belongs to the archaeal RpoK/eukaryotic RPB6 RNA polymerase subunit family. As to quaternary structure, part of the viral DNA-directed RNA polymerase that consists of 8 polII-like subunits (RPB1, RPB2, RPB3, RPB5, RPB6, RPB7, RPB9, RPB10), a capping enzyme and a termination factor.

It localises to the host cytoplasm. The protein resides in the virion. Functionally, component of the DNA-directed RNA polymerase (RNAP) that catalyzes the transcription in the cytoplasm of viral DNA into RNA using the four ribonucleoside triphosphates as substrates. The chain is DNA-directed RNA polymerase subunit 6 homolog from Ornithodoros (relapsing fever ticks).